Reading from the N-terminus, the 273-residue chain is 2,3,4,5-tetrahydropyridine-2,6-dicarboxylate N-succinyltransferase (273 aa).

The substrate site is built by R104 and D141.

It belongs to the transferase hexapeptide repeat family. In terms of assembly, homotrimer.

Its subcellular location is the cytoplasm. It catalyses the reaction (S)-2,3,4,5-tetrahydrodipicolinate + succinyl-CoA + H2O = (S)-2-succinylamino-6-oxoheptanedioate + CoA. It functions in the pathway amino-acid biosynthesis; L-lysine biosynthesis via DAP pathway; LL-2,6-diaminopimelate from (S)-tetrahydrodipicolinate (succinylase route): step 1/3. This is 2,3,4,5-tetrahydropyridine-2,6-dicarboxylate N-succinyltransferase from Thioalkalivibrio sulfidiphilus (strain HL-EbGR7).